Reading from the N-terminus, the 259-residue chain is Protein N-terminal and lysine N-methyltransferase efm7 (259 aa).

S-adenosyl-L-methionine-binding positions include Trp-53, 80–82 (GAA), Asp-102, Trp-138, and Ala-164.

It belongs to the class I-like SAM-binding methyltransferase superfamily. EFM7 family.

The protein localises to the cytoplasm. Functionally, S-adenosyl-L-methionine-dependent protein methyltransferase that trimethylates the N-terminal glycine 'Gly-2' of elongation factor 1-alpha, before also catalyzing the mono- and dimethylation of 'Lys-3'. This is Protein N-terminal and lysine N-methyltransferase efm7 from Emericella nidulans (strain FGSC A4 / ATCC 38163 / CBS 112.46 / NRRL 194 / M139) (Aspergillus nidulans).